The chain runs to 1464 residues: DNA-directed RNA polymerase subunit beta' (1464 aa).

Mg(2+)-binding residues include Asp541, Asp543, and Asp545. Zn(2+) contacts are provided by Cys1022, Cys1098, Cys1105, and Cys1108. The tract at residues 1435 to 1464 is disordered; that stretch reads LEDEQQQIIEVDDSDISVEDEENDFYENED.

Belongs to the RNA polymerase beta' chain family. The RNAP catalytic core consists of 2 alpha, 1 beta, 1 beta' and 1 omega subunit. When a sigma factor is associated with the core the holoenzyme is formed, which can initiate transcription. Requires Mg(2+) as cofactor. It depends on Zn(2+) as a cofactor.

It carries out the reaction RNA(n) + a ribonucleoside 5'-triphosphate = RNA(n+1) + diphosphate. DNA-dependent RNA polymerase catalyzes the transcription of DNA into RNA using the four ribonucleoside triphosphates as substrates. In Metamycoplasma arthritidis (strain 158L3-1) (Mycoplasma arthritidis), this protein is DNA-directed RNA polymerase subunit beta'.